We begin with the raw amino-acid sequence, 254 residues long: Glutathione S-transferase U12 (254 aa).

Positions 19–23 (KKRKK) match the Nuclear localization signal motif. The 82-residue stretch at 33–114 (TTVKLIGTWA…YVDESWPSDL (82 aa)) folds into the GST N-terminal domain. Residues 43–44 (SP), 71–72 (GK), 85–86 (KV), and 98–99 (ES) each bind glutathione. The GST C-terminal domain maps to 120-252 (LPSERAFARF…EFIEFAKKKF (133 aa)).

The protein belongs to the GST superfamily. Tau family.

The protein resides in the nucleus. It catalyses the reaction RX + glutathione = an S-substituted glutathione + a halide anion + H(+). In terms of biological role, may be involved in the conjugation of reduced glutathione to a wide number of exogenous and endogenous hydrophobic electrophiles and have a detoxification role against certain herbicides. The sequence is that of Glutathione S-transferase U12 (GSTU12) from Arabidopsis thaliana (Mouse-ear cress).